The chain runs to 309 residues: Peptide methionine sulfoxide reductase MsrA/MsrB (309 aa).

The tract at residues 1 to 153 (MIYLAGGCFW…PNGYCHIDIN (153 aa)) is peptide methionine sulfoxide reductase A. Cys8 is an active-site residue. Positions 170 to 293 (ATEIKEKLSA…NSLSITFIPK (124 aa)) constitute a MsrB domain. Cys282 serves as the catalytic Nucleophile.

The protein in the N-terminal section; belongs to the MsrA Met sulfoxide reductase family. This sequence in the C-terminal section; belongs to the MsrB Met sulfoxide reductase family.

It carries out the reaction L-methionyl-[protein] + [thioredoxin]-disulfide + H2O = L-methionyl-(S)-S-oxide-[protein] + [thioredoxin]-dithiol. The catalysed reaction is [thioredoxin]-disulfide + L-methionine + H2O = L-methionine (S)-S-oxide + [thioredoxin]-dithiol. It catalyses the reaction L-methionyl-[protein] + [thioredoxin]-disulfide + H2O = L-methionyl-(R)-S-oxide-[protein] + [thioredoxin]-dithiol. In terms of biological role, has an important function as a repair enzyme for proteins that have been inactivated by oxidation. Catalyzes the reversible oxidation-reduction of methionine sulfoxide in proteins to methionine. The protein is Peptide methionine sulfoxide reductase MsrA/MsrB (msrAB) of Streptococcus pyogenes serotype M18 (strain MGAS8232).